The chain runs to 302 residues: MCAERLGQFMTLALVLATFDPARGTDATNPPEGPQDRSPQQKGRLSLQNTAEIQHCLVNAGDVGCGVFECFENNSSEIRGLHGICMTFLHNAGKFDAQGKSFIKDALKCKAHALRHRFGCISRKCPAIREMVFQLQRECYLKHDLCAAAQENTRVIVEMIHFKDLLLHEPYVDLVNLLLTCGEEVKEAITHSVQVQCEQNWGSLCSILSFCTSAIQRPPTAPPERQPQVDRTKLSRAHHGEAGHHLPEPSSRETGRGAKGERGSKSHPNAHARGRVGGLGAQGPSGSSEWEDEQSEYSDIRR.

The N-terminal stretch at 1–24 is a signal peptide; the sequence is MCAERLGQFMTLALVLATFDPARG. The tract at residues 23–44 is disordered; sequence RGTDATNPPEGPQDRSPQQKGR. 2 N-linked (GlcNAc...) asparagine glycosylation sites follow: Asn-73 and Asn-74. The tract at residues 217 to 302 is disordered; the sequence is RPPTAPPERQ…EQSEYSDIRR (86 aa). Residues 227 to 264 are compositionally biased toward basic and acidic residues; it reads PQVDRTKLSRAHHGEAGHHLPEPSSRETGRGAKGERGS. A phosphoserine mark is found at Ser-250 and Ser-251. Position 254 is a phosphothreonine (Thr-254).

This sequence belongs to the stanniocalcin family. As to quaternary structure, homodimer; disulfide-linked.

The protein resides in the secreted. Its function is as follows. Has an anti-hypocalcemic action on calcium and phosphate homeostasis. The protein is Stanniocalcin-2 (STC2) of Pongo abelii (Sumatran orangutan).